Reading from the N-terminus, the 104-residue chain is Urease subunit beta (104 aa).

It belongs to the urease beta subunit family. In terms of assembly, heterotrimer of UreA (gamma), UreB (beta) and UreC (alpha) subunits. Three heterotrimers associate to form the active enzyme.

It is found in the cytoplasm. It carries out the reaction urea + 2 H2O + H(+) = hydrogencarbonate + 2 NH4(+). It participates in nitrogen metabolism; urea degradation; CO(2) and NH(3) from urea (urease route): step 1/1. The protein is Urease subunit beta of Rhodopseudomonas palustris (strain BisB18).